Here is a 362-residue protein sequence, read N- to C-terminus: MVIIMKLLEETLRRIKPADEEVIKKAWSRMDSLSKPIGSLGKLEEIAVQISGITGKVKNEINKKMTVIMCSDNGICEEGVSACPQELTALLAENYVKEITGIGVLSKHVNADMCVVDIGIKSDVKDSRILNKKVAYGTKNMAKEPAMTREEAVKAIETGIELVDKFVKEGYDLFGTGEAGIGNTATSAAVISVLSQIDSDKIVGKGSGLTDEGFLNKKRAVKQAIEINKPNKEDVIDVIAKIGGFDIAGICGCFLGAAKNRVPIVIDGIISASAALCAYKMNANVKDFLISSHLSAEPGIEYVTGAIGLKPCLHMEMRLGEGSGCPLQFFMIESALCLMNNMATLAEASIVDSEFLVDIREK.

Glutamate 321 functions as the Proton acceptor in the catalytic mechanism.

This sequence belongs to the CobT family.

It carries out the reaction 5,6-dimethylbenzimidazole + nicotinate beta-D-ribonucleotide = alpha-ribazole 5'-phosphate + nicotinate + H(+). It functions in the pathway nucleoside biosynthesis; alpha-ribazole biosynthesis; alpha-ribazole from 5,6-dimethylbenzimidazole: step 1/2. Functionally, catalyzes the synthesis of alpha-ribazole-5'-phosphate from nicotinate mononucleotide (NAMN) and 5,6-dimethylbenzimidazole (DMB). The chain is Nicotinate-nucleotide--dimethylbenzimidazole phosphoribosyltransferase from Clostridium tetani (strain Massachusetts / E88).